The primary structure comprises 292 residues: Aquaporin PIP1-3/PIP1-4 (292 aa).

The tract at residues 1-42 (MEGKEEDVRLGANKFSERQPIGTAAQGAGAGDDDKDYKEPPP) is disordered. 2 helical membrane passes run 61–81 (IAEFVATFLFLYITVLTVMGV) and 96–118 (IAWSFGGMIFALVYCTAGISGGH). Positions 120-122 (NPA) match the NPA 1 motif. The next 3 helical transmembrane spans lie at 139-159 (IFYIIMQCLGAICGAGVVKGF), 181-201 (GDGLGAEIVGTFILVYTVFSA), and 215-235 (ILAPLPIGFAVFLVHLATIPI). The NPA 2 motif lies at 241 to 243 (NPA). Residues 263-283 (IFWVGPFIGAALAAIYHQVII) traverse the membrane as a helical segment.

The protein belongs to the MIP/aquaporin (TC 1.A.8) family. PIP (TC 1.A.8.11) subfamily.

The protein localises to the cell membrane. In terms of biological role, aquaporins facilitate the transport of water and small neutral solutes across cell membranes. This is Aquaporin PIP1-3/PIP1-4 (PIP1-3) from Zea mays (Maize).